A 30-amino-acid chain; its full sequence is Cycloviolacin-O9 (30 aa).

The cyclopeptide (Gly-Asn) cross-link spans 1–30 (GIPCGESCVWIPCLTSAVGCSCKSKVCYRN). Cystine bridges form between cysteine 4–cysteine 20, cysteine 8–cysteine 22, and cysteine 13–cysteine 27.

Post-translationally, this is a cyclic peptide.

In terms of biological role, probably participates in a plant defense mechanism. This is Cycloviolacin-O9 from Viola odorata (Sweet violet).